A 192-amino-acid polypeptide reads, in one-letter code: Akirin-1 (192 aa).

The interval 17–71 (LLSPGSPKRRRCAPLPGPTPGLRPPDAEPPPPFQTQTPPQSLQQPAPPGSERRLP) is disordered. Ser22 carries the phosphoserine modification. A Nuclear localization signal motif is present at residues 23 to 28 (PKRRRC). Residues 31 to 49 (LPGPTPGLRPPDAEPPPPF) are compositionally biased toward pro residues. Residues 50–60 (QTQTPPQSLQQ) are compositionally biased toward low complexity. A Phosphothreonine modification is found at Thr72. Over residues 104–122 (ASESQPHSSALTAPSSPGS) the composition is skewed to polar residues. Residues 104–127 (ASESQPHSSALTAPSSPGSSWMKK) form a disordered region. The short motif at 189–192 (SYVS) is the SYVS motif element.

This sequence belongs to the akirin family. In terms of tissue distribution, widely expressed with the highest expression in heart, liver, placenta and peripheral blood leukocytes.

The protein localises to the nucleus. Its function is as follows. Molecular adapter that acts as a bridge between proteins, and which is involved skeletal muscle development. Functions as a signal transducer for MSTN during skeletal muscle regeneration and myogenesis. May regulate chemotaxis of both macrophages and myoblasts by reorganising actin cytoskeleton, leading to more efficient lamellipodia formation via a PI3 kinase dependent pathway. In contrast to AKIRIN2, not involved in nuclear import of proteasomes. This Homo sapiens (Human) protein is Akirin-1.